The chain runs to 327 residues: Urease accessory protein UreD (327 aa).

The protein belongs to the UreD family. UreD, UreF and UreG form a complex that acts as a GTP-hydrolysis-dependent molecular chaperone, activating the urease apoprotein by helping to assemble the nickel containing metallocenter of UreC. The UreE protein probably delivers the nickel.

The protein localises to the cytoplasm. Its function is as follows. Required for maturation of urease via the functional incorporation of the urease nickel metallocenter. The polypeptide is Urease accessory protein UreD (Yersinia enterocolitica serotype O:8 / biotype 1B (strain NCTC 13174 / 8081)).